The sequence spans 380 residues: Protein GOLM2 (380 aa).

An N-acetylmethionine modification is found at Met-1. Over 1–14 the chain is Cytoplasmic; the sequence is MVGFGANRRAGRLP. The helical; Signal-anchor for type II membrane protein transmembrane segment at 15–35 threads the bilayer; sequence SLVLAVLLVVIAVLAFNYWSI. Positions 35–195 form a coiled coil; the sequence is ISSRHVLLQE…QFLQEQKQEA (161 aa). Residues 36 to 380 lie on the Lumenal side of the membrane; that stretch reads SSRHVLLQEE…YGKQRFNDAL (345 aa). Composition is skewed to basic and acidic residues over residues 192-212 and 227-247; these read KQEA…DNHA and KNEE…KRGG. Residues 192–254 are disordered; that stretch reads KQEAHKFESK…RGGDAGMPGI (63 aa). A phosphoserine mark is found at Ser-233 and Ser-275. The segment at 280–380 is disordered; that stretch reads ESHQVISHLP…YGKQRFNDAL (101 aa). Residues 305 to 321 are compositionally biased toward polar residues; sequence NHNGNSRTSKQNPSNPL. The segment covering 344–380 has biased composition (basic and acidic residues); the sequence is ATKDRAGDFHKLKQNDEERELQMDPADYGKQRFNDAL.

The protein belongs to the GOLM family.

It localises to the membrane. This Bos taurus (Bovine) protein is Protein GOLM2 (GOLM2).